A 96-amino-acid chain; its full sequence is Prokineticin Bm8-f (96 aa).

A signal peptide spans 1 to 19 (MKCFAQIVVLLLVIAFSHG). Disulfide bonds link cysteine 26-cysteine 38, cysteine 32-cysteine 50, cysteine 37-cysteine 78, cysteine 60-cysteine 86, and cysteine 80-cysteine 95.

Belongs to the AVIT (prokineticin) family. Expressed by the skin glands.

The protein resides in the secreted. In terms of biological role, potent agonist for both PKR1/PROKR1 and PKR2/PROKR2, and inducer of a potent and long-lasting hyperalgesia. Also potentiates capsaicin-induced TRPV1 current, when tested on DRG neurons. At subnanomolar concentrations, this protein both induces potent chemotaxis of macrophages and stimulates LPS-induced production of the pro-inflammatory cytokines IL-1 and IL-12. In vivo, potently stimulates the contraction of the guinea-pig gastrointestinal (GI) smooth muscle (nanomolar concentration). This is Prokineticin Bm8-f from Bombina maxima (Giant fire-bellied toad).